A 208-amino-acid polypeptide reads, in one-letter code: Heat shock protein 26 (208 aa).

A phosphoserine mark is found at Ser-44, Ser-52, and Ser-58. Positions 71-179 (ANRNDIHWPA…KSKERIIQIQ (109 aa)) constitute a sHSP domain. Positions 187–208 (NVKANESEVKGKENGAPNGKDK) are disordered. Over residues 191–208 (NESEVKGKENGAPNGKDK) the composition is skewed to basic and acidic residues.

The protein belongs to the small heat shock protein (HSP20) family.

In Drosophila melanogaster (Fruit fly), this protein is Heat shock protein 26 (Hsp26).